The following is a 346-amino-acid chain: Sensor protein kinase GraS (346 aa).

Transmembrane regions (helical) follow at residues Met-15–Asp-35 and Leu-43–Phe-63. Residues Glu-126 to Asn-332 form the Histidine kinase domain.

Interacts with GraX.

The protein localises to the cell membrane. The enzyme catalyses ATP + protein L-histidine = ADP + protein N-phospho-L-histidine.. Its function is as follows. Member of the two-component regulatory system GraR/GraS involved in resistance against cationic antimicrobial peptides (CAMPs). Functions as a sensor protein kinase which phosphorylates GraR through the auxiliary protein GraX. In turn, GraR up-regulates many genes such as adhesins, exoproteins, transporters, toxins, and proteins involved in cell wall synthesis. Down-regulates the expression of many genes involved in RNA and amino acid synthesis or glycolysis. The chain is Sensor protein kinase GraS (graS) from Staphylococcus aureus (strain bovine RF122 / ET3-1).